The sequence spans 861 residues: Rod cGMP-specific 3',5'-cyclic phosphodiesterase subunit alpha (861 aa).

An N-acetylglycine modification is found at Gly-2. GAF domains are found at residues 73-222 (QAER…NLIM) and 254-431 (DIER…GWSV). The region spanning 483 to 816 (EEEELAEILQ…KEWKALADEY (334 aa)) is the PDEase domain. Catalysis depends on His-559, which acts as the Proton donor. A divalent metal cation is bound by residues His-563, His-599, Asp-600, and Asp-720. Residues 821-861 (KALEEEKQKQQTAKQGAAGDQPGGNPSPAGGAPASKSCCIQ) are disordered. The span at 830 to 861 (QQTAKQGAAGDQPGGNPSPAGGAPASKSCCIQ) shows a compositional bias: low complexity. Cys-858 is modified (cysteine methyl ester). Residue Cys-858 is the site of S-farnesyl cysteine attachment. Positions 859 to 861 (CIQ) are cleaved as a propeptide — removed in mature form.

The protein belongs to the cyclic nucleotide phosphodiesterase family. Oligomer composed of two catalytic chains (alpha and beta), an inhibitory chain (gamma) and the delta chain. A divalent metal cation is required as a cofactor.

The protein resides in the cell membrane. The protein localises to the cell projection. It localises to the cilium. Its subcellular location is the photoreceptor outer segment. It catalyses the reaction 3',5'-cyclic GMP + H2O = GMP + H(+). Its function is as follows. Rod-specific cGMP phosphodiesterase that catalyzes the hydrolysis of 3',5'-cyclic GMP. This protein participates in processes of transmission and amplification of the visual signal. The protein is Rod cGMP-specific 3',5'-cyclic phosphodiesterase subunit alpha of Canis lupus familiaris (Dog).